The primary structure comprises 629 residues: tRNA uridine 5-carboxymethylaminomethyl modification enzyme MnmG (629 aa).

FAD-binding positions include 13 to 18 (GGGHAG), V125, and S180. Position 273–287 (273–287 (GPRYCPSIEDKVMRF)) interacts with NAD(+). Position 370 (Q370) interacts with FAD.

Belongs to the MnmG family. Homodimer. Heterotetramer of two MnmE and two MnmG subunits. FAD serves as cofactor.

It is found in the cytoplasm. Functionally, NAD-binding protein involved in the addition of a carboxymethylaminomethyl (cmnm) group at the wobble position (U34) of certain tRNAs, forming tRNA-cmnm(5)s(2)U34. This is tRNA uridine 5-carboxymethylaminomethyl modification enzyme MnmG from Photobacterium profundum (strain SS9).